A 209-amino-acid polypeptide reads, in one-letter code: Large ribosomal subunit protein bL9 (209 aa).

The disordered stretch occupies residues R169–L209. Residues E189–L209 are compositionally biased toward acidic residues.

It belongs to the bacterial ribosomal protein bL9 family.

Functionally, binds to the 23S rRNA. The polypeptide is Large ribosomal subunit protein bL9 (Zymomonas mobilis subsp. mobilis (strain ATCC 31821 / ZM4 / CP4)).